A 615-amino-acid polypeptide reads, in one-letter code: MSSASTPTAPYLEDLVRNSLDQNLPWVVQKYGGTSVGKSLDNITKIVGSYIDNGSKVAIVCSARSTQTKSLGTTNLLLQASREALQPAMSSSGDGRSGSMSGTATPFYPKRVGSGFFGKDQSTSMTSSVSSLSQLESQLGRSGSPSPFQSSSSRSPPRSPATPSQDSSISQEPAFHATVDLIKKGHLEAARASLKGGPLRDELEEEIERDCESLRSFLYAAQIIDEISPRSQDSIVGTGERLACKIVAAALRDRGVDSELVVLDNIVDASMSAASEAVSVDAGDQGVAQLGQEFYDQLSFRLGERLRECGQRVPVVTGYFGPVPGSLLAQIGRGYTDLCAALCAVGLKASELQVWKEVDGIFTADPRKVPSARLVPIITPDEAAELTYYGSEVIHPFTMEQVIRARIPIRIKNVENPSGAGTVIYPDVGFPRGLDTEPPKAERIVEGVDERMPTAVTIKDEIIVLNIHSNRKTLSHGFLARIFGTLDRAGVVVDLISTSEVHVSMAMQDFLNRKRLERLVKDLEKIGEVTVSKDMAILSLVGRNMRNAIGSAGLMFASLARAMINIEMISQGASEINISCVIENKDAIKALNVIHESCLSYPRSPATEMAGLQLQ.

Disordered regions lie at residues 84–105 (ALQP…GTAT) and 127–171 (SSVS…SISQ). Low complexity-rich tracts occupy residues 90-102 (SSSG…SMSG) and 127-164 (SSVS…ATPS). Positions 467–537 (IHSNRKTLSH…EVTVSKDMAI (71 aa)) constitute an ACT domain.

Belongs to the aspartokinase family.

It catalyses the reaction L-aspartate + ATP = 4-phospho-L-aspartate + ADP. It participates in amino-acid biosynthesis; L-methionine biosynthesis via de novo pathway; L-homoserine from L-aspartate: step 1/3. The protein operates within amino-acid biosynthesis; L-threonine biosynthesis; L-threonine from L-aspartate: step 1/5. In terms of biological role, phosphorylates aspartate, the first step in the biosynthesis of amino acids that derive from aspartate (the aspartate family of amino acids), including methioinine and threonine, the latter of which is a precursor to isoleucine. The sequence is that of Aspartokinase from Cryptococcus neoformans var. grubii serotype A (strain H99 / ATCC 208821 / CBS 10515 / FGSC 9487) (Filobasidiella neoformans var. grubii).